We begin with the raw amino-acid sequence, 227 residues long: NAD(P)H-hydrate epimerase (227 aa).

The 210-residue stretch at serine 12 to glutamate 221 folds into the YjeF N-terminal domain. Asparagine 59–aspartate 63 lines the (6S)-NADPHX pocket. K(+) contacts are provided by asparagine 60 and aspartate 131. Residues glycine 135 to glutamate 141 and aspartate 164 contribute to the (6S)-NADPHX site. Threonine 167 contributes to the K(+) binding site.

Belongs to the NnrE/AIBP family. Requires K(+) as cofactor.

It catalyses the reaction (6R)-NADHX = (6S)-NADHX. The catalysed reaction is (6R)-NADPHX = (6S)-NADPHX. Catalyzes the epimerization of the S- and R-forms of NAD(P)HX, a damaged form of NAD(P)H that is a result of enzymatic or heat-dependent hydration. This is a prerequisite for the S-specific NAD(P)H-hydrate dehydratase to allow the repair of both epimers of NAD(P)HX. In Pirellula staleyi (strain ATCC 27377 / DSM 6068 / ICPB 4128) (Pirella staleyi), this protein is NAD(P)H-hydrate epimerase.